The chain runs to 478 residues: Proline--tRNA ligase (478 aa).

It belongs to the class-II aminoacyl-tRNA synthetase family. ProS type 3 subfamily. As to quaternary structure, homodimer.

The protein localises to the cytoplasm. It catalyses the reaction tRNA(Pro) + L-proline + ATP = L-prolyl-tRNA(Pro) + AMP + diphosphate. Catalyzes the attachment of proline to tRNA(Pro) in a two-step reaction: proline is first activated by ATP to form Pro-AMP and then transferred to the acceptor end of tRNA(Pro). This Methanoregula boonei (strain DSM 21154 / JCM 14090 / 6A8) protein is Proline--tRNA ligase.